A 121-amino-acid chain; its full sequence is Large ribosomal subunit protein bL12 (121 aa).

The protein belongs to the bacterial ribosomal protein bL12 family. As to quaternary structure, homodimer. Part of the ribosomal stalk of the 50S ribosomal subunit. Forms a multimeric L10(L12)X complex, where L10 forms an elongated spine to which 2 to 4 L12 dimers bind in a sequential fashion. Binds GTP-bound translation factors.

Its function is as follows. Forms part of the ribosomal stalk which helps the ribosome interact with GTP-bound translation factors. Is thus essential for accurate translation. The protein is Large ribosomal subunit protein bL12 of Mesomycoplasma hyopneumoniae (strain 7448) (Mycoplasma hyopneumoniae).